A 573-amino-acid polypeptide reads, in one-letter code: 60 kDa heat shock protein, mitochondrial (573 aa).

Residues 1 to 26 (MLRLPTVLRQMRPVSRALAPHLTRAY) constitute a mitochondrion transit peptide. Lysine 31 is subject to N6-succinyllysine. Phosphoserine is present on residues serine 67 and serine 70. Lysine 75 is a binding site for ATP. Position 75 is an N6-acetyllysine (lysine 75). N6-acetyllysine; alternate is present on lysine 82. Residue lysine 82 is modified to N6-succinyllysine; alternate. Lysine 87 carries the N6-acetyllysine modification. Residue tyrosine 90 is modified to Phosphotyrosine. At lysine 91 the chain carries N6-acetyllysine. Residue 111–115 (DGTTT) coordinates ATP. An N6-acetyllysine; alternate modification is found at lysine 125. At lysine 125 the chain carries N6-succinyllysine; alternate. Lysine 130 bears the N6-acetyllysine mark. An N6-acetyllysine; alternate modification is found at lysine 133. Lysine 133 carries the N6-succinyllysine; alternate modification. Position 133 is an N6-malonyllysine; alternate (lysine 133). Position 156 is an N6-acetyllysine (lysine 156). 5 positions are modified to N6-acetyllysine; alternate: lysine 191, lysine 202, lysine 205, lysine 218, and lysine 236. An N6-succinyllysine; alternate mark is found at lysine 191, lysine 202, lysine 205, lysine 218, and lysine 236. Lysine 249 carries the N6-acetyllysine modification. An N6-acetyllysine; alternate modification is found at lysine 250. N6-succinyllysine; alternate is present on lysine 250. Lysine 269 and lysine 292 each carry N6-acetyllysine. Lysine 301 is modified (N6-succinyllysine). Residue lysine 314 is modified to N6-acetyllysine. Lysine 352 carries the post-translational modification N6-acetyllysine; alternate. The residue at position 352 (lysine 352) is an N6-succinyllysine; alternate. Lysine 359 and lysine 389 each carry N6-acetyllysine. At lysine 396 the chain carries N6-acetyllysine; alternate. N6-succinyllysine; alternate is present on lysine 396. Serine 410 is modified (phosphoserine). Residue glycine 440 participates in ATP binding. Lysine 455 carries the N6-acetyllysine; alternate modification. Position 455 is an N6-succinyllysine; alternate (lysine 455). An N6-acetyllysine modification is found at lysine 469. An N6-acetyllysine; alternate modification is found at lysine 481. Lysine 481 is subject to N6-succinyllysine; alternate. Serine 488 is subject to Phosphoserine. ATP is bound at residue aspartate 520. Residue lysine 551 forms a Glycyl lysine isopeptide (Lys-Gly) (interchain with G-Cter in SUMO2) linkage.

Belongs to the chaperonin (HSP60) family. As to quaternary structure, homoheptamer arranged in a ring structure. The functional units of these chaperonins consist of heptameric rings of the large subunit Hsp60, which function as a back-to-back double ring. Interacts with 2 heptameric Hsp10 rings to form the symmetrical football complex. Interacts with HRAS. Interacts with ATAD3A. Interacts with ETFBKMT and EEF1AKMT3. Interacts with MFHAS1.

It localises to the mitochondrion matrix. It catalyses the reaction ATP + H2O + a folded polypeptide = ADP + phosphate + an unfolded polypeptide.. Functionally, chaperonin implicated in mitochondrial protein import and macromolecular assembly. Together with Hsp10, facilitates the correct folding of imported proteins. May also prevent misfolding and promote the refolding and proper assembly of unfolded polypeptides generated under stress conditions in the mitochondrial matrix. The functional units of these chaperonins consist of heptameric rings of the large subunit Hsp60, which function as a back-to-back double ring. In a cyclic reaction, Hsp60 ring complexes bind one unfolded substrate protein per ring, followed by the binding of ATP and association with 2 heptameric rings of the co-chaperonin Hsp10. This leads to sequestration of the substrate protein in the inner cavity of Hsp60 where, for a certain period of time, it can fold undisturbed by other cell components. Synchronous hydrolysis of ATP in all Hsp60 subunits results in the dissociation of the chaperonin rings and the release of ADP and the folded substrate protein. This chain is 60 kDa heat shock protein, mitochondrial (HSPD1), found in Cricetulus griseus (Chinese hamster).